A 437-amino-acid polypeptide reads, in one-letter code: Protein arginine methyltransferase NDUFAF7, mitochondrial (437 aa).

The N-terminal 42 residues, M1–S42, are a transit peptide targeting the mitochondrion.

The protein belongs to the NDUFAF7 family.

It is found in the mitochondrion. It catalyses the reaction L-arginyl-[protein] + 2 S-adenosyl-L-methionine = N(omega),N(omega)'-dimethyl-L-arginyl-[protein] + 2 S-adenosyl-L-homocysteine + 2 H(+). In terms of biological role, arginine methyltransferase involved in the assembly or stability of mitochondrial NADH:ubiquinone oxidoreductase complex (complex I). Acts by mediating symmetric dimethylation of 'Arg-118' of ndufs2 after it assembles into the complex I, stabilizing the early intermediate complex. The protein is Protein arginine methyltransferase NDUFAF7, mitochondrial of Xenopus laevis (African clawed frog).